Here is a 1510-residue protein sequence, read N- to C-terminus: MGGGRRGGRREAEEGVAVAGRSRGVAAAAARHEVAGELELASAGGLGGGGGDELVDPDQLTYIHNVFKIDLYSHVLVNLLVTICKDEKLQNILGHFQKEFEGGVSAENLGSQYGGYGSFLPTYQRSPPALSQSGSPAVLPNHGSASRSPYIPLESVQKNHFVKQAIDGRRKNNYCQRTSSENDSNHSQQLLNSGPEQKTAKIRIKVNNKCLERNNAAIYSGLGLDISPSSSIDDSPQWSIEAPESKLFPDESADTIFQIMTCHSVPGGLLLSPLAENVLELRQKSTAVTKKHEAPVYDNDKEELQRNCCHTSSAAPDNNYQLVKKIKLDEQRDHLPEFENSKYRHKNATIMKKGAKPELKDISDEIDSIRAPRCAKTEKHAVGESADFIADTSGRLKEAKNGQFKGKGSTQSSLSIIDVKAANSANDDKHPKGKAKLKVTLVRNAKMESSLDDGFSHKTKSDKCNDQPVTTSSQLQIDPAKKTSLKRDRGKVVCAKDEPSQYKSKELRSLVDAESMGTTTENVAGNSSELLKGKKVSALQASLFGKKLKIKTHKKPNYDTTRKPNGENEGYVLDHRNGSTYLHTEDKSLKTEKESATSGLTDKDFSGGGNDGDHKISPIVVDKSASMPSRCKNETTEASMAVPASEPVDQWVCCDKCETWRLLPYGMNSDTLPKKWRCSMQSWLPGMNNCKLSEGETTNAIRALYVVPIPENNISLDSRCDTATLVRSNDAAIMSDNLGMPEISKSSKKLHAPRNRDGLDCFPKLKEKQKRIESSDKGEKSTVTISSGQTMAKDRMHRKRKTSGADYDNLIASKKLKKVYNEPPKHQPPQFELSKSRPSTKGSLKELPKHTNISPGMGKHALPSSGKQFCDGDNSDRGARASDAGKSDPRDLFIKKNKSKQMQLRQHGPDPRPSDAFAKHVVKEVLSESNAAKEKLGSDLKFLKVDDHEKSAHARGPVTGTNSNAIFSEKEDLIEQHLENIHFQHPLLSESSVRRNICNVQASTAATSSSSKVSSSHKNKPEFQETRTSPVESVSSSPLRTSDKKHLDRHRTNSYAVAEIVHSQESVKTGASCSKEKYGFECGSDHTKPHVSGCSNRVMHQDALEDGDLDKQNILTNGVFNNRSSGLGIRNDQGQPNSLVEQKVNSHVLPIHGSGDFRRPTPDQNGKTLPQYNSNQSDQAKLSSGKHPTQVRPDKGNVEYIDLKTNPSTVAGSKLLPGLNNKVNGNASNKSKQSVVENMKHAAIHVDASTPINASALLKEARDLKHLSDRLKGKGDDLESANICFEACLKFLHVASLKEAAGVDSSKQGDPINTMTLYSDTGNLCGFCAREFERLKKMANAALAYKCVEVAYMKAAFYKHPGAIKDSHALQAASVIAPPAESPSSSASDVDNLNNPSTIAKIVSTRGLCTSQIAKNPISRSNHHLMGLLAYSFSYDPFCLLDKVEDTNYAFEGTRKSQSAFFSYLSGIEKDQADGIALLTEVLNFSFHNVKGLLQLIRHSLECINHERFK.

A compositionally biased stretch (polar residues) spans 174–196; sequence YCQRTSSENDSNHSQQLLNSGPE. 4 disordered regions span residues 174-198, 449-497, 555-574, and 582-616; these read YCQR…PEQK, SSLD…CAKD, KPNY…YVLD, and LHTE…DHKI. Residues 454-465 show a composition bias toward basic and acidic residues; that stretch reads GFSHKTKSDKCN. Polar residues predominate over residues 467 to 476; sequence QPVTTSSQLQ. Basic and acidic residues-rich tracts occupy residues 479 to 497 and 556 to 574; these read PAKK…CAKD and PNYD…YVLD. Residues 645–698 form a CW-type zinc finger; it reads SEPVDQWVCCDKCETWRLLPYGMNSDTLPKKWRCSMQSWLPGMNNCKLSEGETT. Zn(2+) is bound by residues Cys-654, Cys-657, Cys-678, and Cys-690. Positions 768-780 are enriched in basic and acidic residues; that stretch reads KQKRIESSDKGEK. 3 disordered regions span residues 768 to 893, 1003 to 1050, and 1149 to 1194; these read KQKR…RDLF, STAA…LDRH, and LPIH…VRPD. The span at 781-790 shows a compositional bias: polar residues; the sequence is STVTISSGQT. Residues 874–893 are compositionally biased toward basic and acidic residues; it reads NSDRGARASDAGKSDPRDLF. A compositionally biased stretch (low complexity) spans 1003–1016; sequence STAATSSSSKVSSS. Composition is skewed to polar residues over residues 1026 to 1040 and 1162 to 1182; these read TRTS…SPLR and PDQN…QAKL.

Highly expressed in young panicles. Expressed at low levels in leaf sheaths, nodes, internodes and axillary buds.

It localises to the nucleus. In terms of biological role, binds to histones H3K4me1, H3K4me2 and H3K4me3 in GST pull-down assay. May facilitate the recruitment of effectors to mediate gene expression. In Oryza sativa subsp. japonica (Rice), this protein is Cysteine-tryptophan domain-containing zinc finger protein 5.